The primary structure comprises 53 residues: Mitochondrial sheath formation-associated protein (53 aa).

Mitochondrial intermembrane segments follow at residues 1–6 (MIVLGW) and 1–7 (MIVLGWM). The next 2 helical transmembrane spans lie at 7 to 23 (MLFV…PEAM) and 8 to 24 (LFVG…EAMP). Cytoplasmic-facing segments span residues 24-53 (PPTL…ELLL) and 25-40 (PTLK…ENKA).

Interacts with VDAC3. As to expression, testis specific. Detected only in germ cells at the step of spermiogenesis (at protein level). Expressed during the middle steps of spermatid development. In terms of tissue distribution, testis specific. Detected only in germ cells at the step of spermiogenesis (at protein level). Expressed in the late steps of spermatid development.

The protein resides in the mitochondrion outer membrane. In terms of biological role, regulates sperm development. May be involved in mitochondrial sheath formation. This Mus musculus (Mouse) protein is Mitochondrial sheath formation-associated protein.